The primary structure comprises 797 residues: N-acetylneuraminate (7)9-O-acetyltransferase (797 aa).

Topologically, residues 1-18 are cytoplasmic; the sequence is MAALAYNLGKREINHYFS. The chain crosses the membrane as a helical span at residues 19–39; the sequence is VRSAKVLALVAVLLLAACHLA. Residues 40-313 lie on the Lumenal side of the membrane; sequence SRRYRGNDSC…QPRPPLTLIQ (274 aa). N-linked (GlcNAc...) asparagine glycosylation occurs at asparagine 46. Catalysis depends on serine 94, which acts as the Acyl-ester intermediate. N-linked (GlcNAc...) asparagine glycans are attached at residues asparagine 175 and asparagine 187. Active-site residues include aspartate 270 and histidine 273. The chain crosses the membrane as a helical span at residues 314-334; it reads KLAACFFTLSIIGYFIFYVIH. Residues 335-363 lie on the Cytoplasmic side of the membrane; that stretch reads RNAHRKNKPCTDLESGEEKKNIINTPVSS. Residues 364–384 form a helical membrane-spanning segment; the sequence is LEILLQSFCKLGLIMAYFYMC. Over 385–395 the chain is Lumenal; the sequence is DRANLFMKENK. The helical transmembrane segment at 396-416 threads the bilayer; sequence FYTHSSFFIPIIYILVLGVFY. The Cytoplasmic portion of the chain corresponds to 417–439; it reads NENTKETKVLNREQTDEWKGWMQ. A helical membrane pass occupies residues 440 to 460; sequence LVILIYHISGASTFLPVYMHI. Arginine 461 is a topological domain (lumenal). The helical transmembrane segment at 462-482 threads the bilayer; sequence VLVAAYLFQTGYGHFSYFWIK. At 483–486 the chain is on the cytoplasmic side; it reads GDFG. The chain crosses the membrane as a helical span at residues 487–507; the sequence is IHRVCQVLFRLNFLVVVLCIV. The Lumenal portion of the chain corresponds to 508–513; that stretch reads MDRPYQ. Residues 514-534 traverse the membrane as a helical segment; that stretch reads FYYFVPLVTVWFMVIYVTLAL. The Cytoplasmic segment spans residues 535-546; sequence WPQITQKKANGN. A helical membrane pass occupies residues 547–567; the sequence is FFWYLGLLLKLGLLLLCIWFL. Residues 568 to 599 are Lumenal-facing; sequence AYSQGAFEKIFSLWPLSKCFELEGSVYEWWFR. Residues 600–620 form a helical membrane-spanning segment; it reads WRLDRYVVFHGVLFAFIYLAL. Residues 621–638 lie on the Cytoplasmic side of the membrane; the sequence is QRRQILSEGKGEPLFSNK. The helical transmembrane segment at 639–659 threads the bilayer; sequence ISNFLLFVSVVSFLTYSIWAS. Residues 660 to 671 are Lumenal-facing; sequence SCKNKAECNELH. A helical membrane pass occupies residues 672-692; that stretch reads PSVSVVQIVAFILIRNIPGYA. Residues 693 to 698 lie on the Cytoplasmic side of the membrane; that stretch reads RSIYSS. A helical membrane pass occupies residues 699–719; that stretch reads FFAWFGKISLELFICQYHIWL. The Lumenal portion of the chain corresponds to 720–725; it reads AADTRG. A helical transmembrane segment spans residues 726–746; it reads ILVLIPGNPTLNIIVSTFIFV. The Cytoplasmic segment spans residues 747–770; it reads CVAHEISQITTDLAQVVIPKDNPS. The chain crosses the membrane as a helical span at residues 771 to 791; the sequence is LFRRLACTIAFFGGVLILSSI. The Lumenal portion of the chain corresponds to 792 to 797; sequence QDKSRL.

It belongs to the PC-esterase family. CASD1 subfamily. N-glycosylated. Ubiquitously expressed.

Its subcellular location is the golgi apparatus membrane. It carries out the reaction CMP-N-acetyl-beta-neuraminate + acetyl-CoA = CMP-N-acetyl-9-O-acetyl-beta-neuraminate + CoA. The enzyme catalyses a ganglioside GD3 (d18:1(4E)) + acetyl-CoA = a ganglioside Ac-O-7-GD3(d18:1(4E)) + CoA. It catalyses the reaction CMP-N-acetyl-beta-neuraminate + acetyl-CoA = CMP-N-acetyl-7-O-acetyl-beta-neuraminate + CoA. Functionally, key enzyme in the biosynthesis of O-acetylated (O-Ac) sialoglycans such as gangliosides O-AcGD3 and O-AcGD2, which affect various processes such as cell-cell interactions, host-pathogen recognition. Catalyzes the transfer of an acetyl group from a donor, the acetyl-coenzyme-A molecule (acetyl-CoA), to the C7/8/9 OH-position of a sialic acid residue. The primary site of O-acetyl group transfer on sialic acid seems to depend on cell type and can be C7, from which the O-acetyl group could subsequently migrate to the C8 and then to the C9 position, or at C9 with possibility of migrating to the C8 and then to the C7 position. Together with ST8SIA1 (GD3 synthase) it increases the levels of ganglioside Ac-O-7-GD3. Can transfer the acetyl group from acetyl-CoA to free sialate (N-acetylneuraminate, Neu5Ac) in vitro, but has preferred substrate specificity for CMP-activated sialate (CMP-Neu5Ac), resulting in the formation of 9-O-acetylated CMP-Neu5Ac (CMP-Neu5,9Ac2). CMP-Neu5,9Ac2 may be used by sialyltransferases as a sialate donor for glycoconjugate acceptors such as ganglioside GD3. O-acetylation at position C9 of ganglioside GD3 can counteract the pro-apoptotic effects of the ganglioside GD3 in tumor cells. The chain is N-acetylneuraminate (7)9-O-acetyltransferase from Mus musculus (Mouse).